The primary structure comprises 634 residues: TATA box-binding protein-associated factor RNA polymerase I subunit B (634 aa).

An RRN7-type zinc finger spans residues 19-51; that stretch reads LVCEYCGHGSEYAEDDADNGFFTCRQCSAIHTS. Cys21, Cys24, Cys42, and Cys45 together coordinate Zn(2+). The tract at residues 51–80 is B-reader; the sequence is STQNTATNPFDFPMTPAHLSAHRRPTQPTP. Residues 56 to 117 form a disordered region; the sequence is ATNPFDFPMT…EPRDFATGAN (62 aa). Residues 77–87 are compositionally biased toward pro residues; the sequence is QPTPTPKPFPA. Positions 81-83 are B-linker; it reads TPK. The N-terminal cyclin fold stretch occupies residues 84-281; it reads PFPAPRGAAT…DKLLGSSLND (198 aa). Residues 88-98 are compositionally biased toward low complexity; it reads PRGAATGAAAP. The C-terminal cyclin fold stretch occupies residues 282-284; the sequence is CPL.

It belongs to the RRN7/TAF1B family.

The protein localises to the nucleus. The protein resides in the nucleolus. Component of RNA polymerase I core factor complex that acts as a GTF2B/TFIIB-like factor and plays a key role in multiple steps during transcription initiation such as pre-initiation complex (PIC) assembly and postpolymerase recruitment events in polymerase I (Pol I) transcription. Binds rDNA promoters and plays a role in Pol I recruitment. The chain is TATA box-binding protein-associated factor RNA polymerase I subunit B from Oryza sativa subsp. indica (Rice).